The primary structure comprises 65 residues: Large ribosomal subunit protein uL29 (65 aa).

Belongs to the universal ribosomal protein uL29 family.

The protein is Large ribosomal subunit protein uL29 of Bacteroides fragilis (strain ATCC 25285 / DSM 2151 / CCUG 4856 / JCM 11019 / LMG 10263 / NCTC 9343 / Onslow / VPI 2553 / EN-2).